Reading from the N-terminus, the 282-residue chain is F-actin-capping protein subunit alpha (282 aa).

It belongs to the F-actin-capping protein alpha subunit family. As to quaternary structure, component of the F-actin capping complex, composed of a heterodimer of an alpha and a beta subunit.

The protein localises to the cytoplasm. It is found in the cytoskeleton. In terms of biological role, F-actin-capping proteins bind in a Ca(2+)-independent manner to the fast growing ends of actin filaments (barbed end) thereby blocking the exchange of subunits at these ends. Unlike other capping proteins (such as gelsolin and severin), these proteins do not sever actin filaments. The chain is F-actin-capping protein subunit alpha (cap-1) from Caenorhabditis elegans.